The chain runs to 519 residues: Xylose import ATP-binding protein XylG (519 aa).

ABC transporter domains are found at residues 6-245 (MTMR…VGRE) and 262-507 (FEAR…IRPV). 38 to 45 (GENGAGKS) lines the ATP pocket.

This sequence belongs to the ABC transporter superfamily. Xylose importer (TC 3.A.1.2.4) family. As to quaternary structure, the complex is composed of two ATP-binding proteins (XylG), two transmembrane proteins (XylH) and a solute-binding protein (XylF).

It is found in the cell inner membrane. It carries out the reaction D-xylose(out) + ATP + H2O = D-xylose(in) + ADP + phosphate + H(+). Part of the ABC transporter complex XylFGH involved in xylose import. Responsible for energy coupling to the transport system. This is Xylose import ATP-binding protein XylG from Paraburkholderia xenovorans (strain LB400).